The sequence spans 483 residues: tRNA sulfurtransferase (483 aa).

Residues 61 to 165 form the THUMP domain; that stretch reads EAVCDALTRI…DDKLILVNAR (105 aa). Residues 183-184, Lys-265, Gly-287, and Gln-296 contribute to the ATP site; that span reads LI. Residues Cys-344 and Cys-456 are joined by a disulfide bond. The region spanning 404-483 is the Rhodanese domain; it reads FATNDVVLDI…FNNVKVYRKK (80 aa). Cys-456 functions as the Cysteine persulfide intermediate in the catalytic mechanism.

The protein belongs to the ThiI family.

The protein resides in the cytoplasm. It catalyses the reaction [ThiI sulfur-carrier protein]-S-sulfanyl-L-cysteine + a uridine in tRNA + 2 reduced [2Fe-2S]-[ferredoxin] + ATP + H(+) = [ThiI sulfur-carrier protein]-L-cysteine + a 4-thiouridine in tRNA + 2 oxidized [2Fe-2S]-[ferredoxin] + AMP + diphosphate. The catalysed reaction is [ThiS sulfur-carrier protein]-C-terminal Gly-Gly-AMP + S-sulfanyl-L-cysteinyl-[cysteine desulfurase] + AH2 = [ThiS sulfur-carrier protein]-C-terminal-Gly-aminoethanethioate + L-cysteinyl-[cysteine desulfurase] + A + AMP + 2 H(+). It functions in the pathway cofactor biosynthesis; thiamine diphosphate biosynthesis. In terms of biological role, catalyzes the ATP-dependent transfer of a sulfur to tRNA to produce 4-thiouridine in position 8 of tRNAs, which functions as a near-UV photosensor. Also catalyzes the transfer of sulfur to the sulfur carrier protein ThiS, forming ThiS-thiocarboxylate. This is a step in the synthesis of thiazole, in the thiamine biosynthesis pathway. The sulfur is donated as persulfide by IscS. The sequence is that of tRNA sulfurtransferase from Proteus mirabilis (strain HI4320).